A 503-amino-acid polypeptide reads, in one-letter code: Probable cytosol aminopeptidase (503 aa).

2 residues coordinate Mn(2+): K274 and D279. K286 is an active-site residue. Residues D297, D356, and E358 each contribute to the Mn(2+) site. R360 is an active-site residue.

The protein belongs to the peptidase M17 family. Mn(2+) serves as cofactor.

It is found in the cytoplasm. It carries out the reaction Release of an N-terminal amino acid, Xaa-|-Yaa-, in which Xaa is preferably Leu, but may be other amino acids including Pro although not Arg or Lys, and Yaa may be Pro. Amino acid amides and methyl esters are also readily hydrolyzed, but rates on arylamides are exceedingly low.. The catalysed reaction is Release of an N-terminal amino acid, preferentially leucine, but not glutamic or aspartic acids.. Presumably involved in the processing and regular turnover of intracellular proteins. Catalyzes the removal of unsubstituted N-terminal amino acids from various peptides. The polypeptide is Probable cytosol aminopeptidase (Paraburkholderia phymatum (strain DSM 17167 / CIP 108236 / LMG 21445 / STM815) (Burkholderia phymatum)).